The chain runs to 432 residues: Glutamyl-tRNA reductase (432 aa).

Substrate is bound by residues 55–58 (TCNR), Ser-114, 119–121 (ETQ), and Gln-125. Cys-56 serves as the catalytic Nucleophile. Residue 194-199 (GAGEMI) participates in NADP(+) binding.

It belongs to the glutamyl-tRNA reductase family. In terms of assembly, homodimer.

It carries out the reaction (S)-4-amino-5-oxopentanoate + tRNA(Glu) + NADP(+) = L-glutamyl-tRNA(Glu) + NADPH + H(+). The protein operates within porphyrin-containing compound metabolism; protoporphyrin-IX biosynthesis; 5-aminolevulinate from L-glutamyl-tRNA(Glu): step 1/2. Functionally, catalyzes the NADPH-dependent reduction of glutamyl-tRNA(Glu) to glutamate 1-semialdehyde (GSA). The polypeptide is Glutamyl-tRNA reductase (Burkholderia pseudomallei (strain 1710b)).